The following is a 559-amino-acid chain: Methionine--tRNA ligase (559 aa).

The 'HIGH' region motif lies at P10–T20. Positions 141, 144, 154, and 157 each coordinate Zn(2+). Positions K331–S335 match the 'KMSKS' region motif. Residue K334 participates in ATP binding.

It belongs to the class-I aminoacyl-tRNA synthetase family. MetG type 1 subfamily. Requires Zn(2+) as cofactor.

The protein resides in the cytoplasm. The catalysed reaction is tRNA(Met) + L-methionine + ATP = L-methionyl-tRNA(Met) + AMP + diphosphate. Its function is as follows. Is required not only for elongation of protein synthesis but also for the initiation of all mRNA translation through initiator tRNA(fMet) aminoacylation. This Korarchaeum cryptofilum (strain OPF8) protein is Methionine--tRNA ligase.